Consider the following 346-residue polypeptide: Isopentenyl-diphosphate delta-isomerase (346 aa).

Residue 9 to 10 (RK) coordinates substrate. FMN is bound by residues serine 67, 68–70 (SMT), serine 98, and asparagine 127. 98 to 100 (SQR) contributes to the substrate binding site. Residue glutamine 162 coordinates substrate. A Mg(2+)-binding site is contributed by glutamate 163. FMN-binding positions include lysine 194, threonine 224, 274–276 (GIR), and 295–296 (AA).

This sequence belongs to the IPP isomerase type 2 family. Homooctamer. Dimer of tetramers. It depends on FMN as a cofactor. The cofactor is NADPH. Requires Mg(2+) as cofactor.

It localises to the cytoplasm. The enzyme catalyses isopentenyl diphosphate = dimethylallyl diphosphate. Functionally, involved in the biosynthesis of isoprenoids. Catalyzes the 1,3-allylic rearrangement of the homoallylic substrate isopentenyl (IPP) to its allylic isomer, dimethylallyl diphosphate (DMAPP). The chain is Isopentenyl-diphosphate delta-isomerase from Stutzerimonas stutzeri (strain A1501) (Pseudomonas stutzeri).